We begin with the raw amino-acid sequence, 122 residues long: Basic phospholipase A2 (122 aa).

Disulfide bonds link C26–C115, C28–C44, C43–C95, C49–C122, C50–C88, C57–C81, and C75–C86. Residues Y27, G29, and G31 each contribute to the Ca(2+) site. Residue H47 is part of the active site. A Ca(2+)-binding site is contributed by D48. Residue D89 is part of the active site.

This sequence belongs to the phospholipase A2 family. Group II subfamily. D49 sub-subfamily. Homodimer. The cofactor is Ca(2+). Expressed by the venom gland.

It is found in the secreted. The enzyme catalyses a 1,2-diacyl-sn-glycero-3-phosphocholine + H2O = a 1-acyl-sn-glycero-3-phosphocholine + a fatty acid + H(+). Functionally, snake venom phospholipase A2 (PLA2) that inhibits neuromuscular transmission by blocking acetylcholine release from the nerve termini. PLA2 catalyzes the calcium-dependent hydrolysis of the 2-acyl groups in 3-sn-phosphoglycerides. This Gloydius blomhoffii (Mamushi) protein is Basic phospholipase A2.